A 154-amino-acid polypeptide reads, in one-letter code: MIQIDFGTVITSAITAVFFTGGTNYVLQKKNRKGNEIFTKGYILIDEIYNINNKRIETAAAFVPFYNHPEGYLEKLHTDYFKELSAFELIVKKFSILFDKELNIKLQEYINYLREVEVALRGFMNDDPIIEVNFNQEYIERLIDEITNLIKKHI.

This is an uncharacterized protein from Bacillus subtilis (strain 168).